A 297-amino-acid polypeptide reads, in one-letter code: tRNA dimethylallyltransferase (297 aa).

10–17 serves as a coordination point for ATP; it reads GITASGKS. Substrate is bound at residue 12-17; the sequence is TASGKS. Residues 36–39 form an interaction with substrate tRNA region; the sequence is DSKQ.

Belongs to the IPP transferase family. In terms of assembly, monomer. Mg(2+) serves as cofactor.

The catalysed reaction is adenosine(37) in tRNA + dimethylallyl diphosphate = N(6)-dimethylallyladenosine(37) in tRNA + diphosphate. In terms of biological role, catalyzes the transfer of a dimethylallyl group onto the adenine at position 37 in tRNAs that read codons beginning with uridine, leading to the formation of N6-(dimethylallyl)adenosine (i(6)A). The polypeptide is tRNA dimethylallyltransferase (Wolbachia pipientis wMel).